Here is a 332-residue protein sequence, read N- to C-terminus: Ornithine carbamoyltransferase, catabolic (332 aa).

Carbamoyl phosphate is bound by residues 60 to 63 (STRT), Gln-87, Arg-111, and 138 to 141 (HPTQ). Residues Asn-170, Asp-230, and 234–235 (SM) each bind L-ornithine. Carbamoyl phosphate is bound by residues 271–272 (CL) and Arg-316.

Belongs to the aspartate/ornithine carbamoyltransferase superfamily. OTCase family.

It localises to the cytoplasm. The enzyme catalyses carbamoyl phosphate + L-ornithine = L-citrulline + phosphate + H(+). Its pathway is amino-acid degradation; L-arginine degradation via ADI pathway; carbamoyl phosphate from L-arginine: step 2/2. Its function is as follows. Reversibly catalyzes the transfer of the carbamoyl group from carbamoyl phosphate (CP) to the N(epsilon) atom of ornithine (ORN) to produce L-citrulline. In Bacillus cereus (strain ATCC 14579 / DSM 31 / CCUG 7414 / JCM 2152 / NBRC 15305 / NCIMB 9373 / NCTC 2599 / NRRL B-3711), this protein is Ornithine carbamoyltransferase, catabolic (arcB).